A 113-amino-acid polypeptide reads, in one-letter code: Mitochondrial import inner membrane translocase subunit tim16 (113 aa).

A J-like region spans residues 56 to 108; the sequence is KILGLENVETVSKEDIDKKYNELLTINDPKDGGSEYLQIKISGAKHCLHSALK.

Belongs to the TIM16/PAM16 family. Probable component of the PAM complex at least composed of a mitochondrial HSP70 protein, grepE, tim16 and tim14. Associates with the TIM23 complex.

The protein localises to the mitochondrion inner membrane. Its function is as follows. Regulates ATP-dependent protein translocation into the mitochondrial matrix. The sequence is that of Mitochondrial import inner membrane translocase subunit tim16 (timm16) from Dictyostelium discoideum (Social amoeba).